Consider the following 42-residue polypeptide: Protein MGF 360-20R (42 aa).

It belongs to the asfivirus MGF 360 family.

In terms of biological role, plays a role in virus cell tropism, and may be required for efficient virus replication in macrophages. The protein is Protein MGF 360-20R of African swine fever virus (strain Badajoz 1971 Vero-adapted) (Ba71V).